We begin with the raw amino-acid sequence, 508 residues long: Protein FAM217A (508 aa).

It belongs to the FAM217 family.

This chain is Protein FAM217A (FAM217A), found in Homo sapiens (Human).